Here is a 213-residue protein sequence, read N- to C-terminus: Cell wall protein PGA62 (213 aa).

The N-terminal stretch at 1–18 is a signal peptide; sequence MQFSSAVVLSAVAGSALA. Residue asparagine 22 is glycosylated (N-linked (GlcNAc...) asparagine). The segment at 120–194 is disordered; it reads CPLPSTEAPG…APAVSTAEAG (75 aa). Residues 145–172 are compositionally biased toward polar residues; the sequence is PVPTTAAESSPAKTTAAESSPAQETTPK. Over residues 173-194 the composition is skewed to low complexity; the sequence is TVAAESSSAETTAPAVSTAEAG. Glycine 194 carries the GPI-anchor amidated glycine lipid modification. Positions 195–213 are cleaved as a propeptide — removed in mature form; that stretch reads AAANAVPVAAGLLALAALF.

It belongs to the HWP1 family. In terms of processing, N- and O-glycosylated. The GPI-anchor is attached to the protein in the endoplasmic reticulum and serves to target the protein to the cell surface. There, the glucosamine-inositol phospholipid moiety is cleaved off and the GPI-modified mannoprotein is covalently attached via its lipidless GPI glycan remnant to the 1,6-beta-glucan of the outer cell wall layer.

It is found in the secreted. The protein resides in the cell wall. Its subcellular location is the membrane. Its function is as follows. Cell wall protein necessary for cell wall integrity. Plays only a minor role in hyphal morphogenesis and is not critical to biofilm formation. This Candida albicans (strain SC5314 / ATCC MYA-2876) (Yeast) protein is Cell wall protein PGA62 (PGA62).